The chain runs to 182 residues: Probable nicotinate-nucleotide adenylyltransferase (182 aa).

Belongs to the NadD family.

The enzyme catalyses nicotinate beta-D-ribonucleotide + ATP + H(+) = deamido-NAD(+) + diphosphate. The protein operates within cofactor biosynthesis; NAD(+) biosynthesis; deamido-NAD(+) from nicotinate D-ribonucleotide: step 1/1. Functionally, catalyzes the reversible adenylation of nicotinate mononucleotide (NaMN) to nicotinic acid adenine dinucleotide (NaAD). The sequence is that of Probable nicotinate-nucleotide adenylyltransferase from Sulfurimonas denitrificans (strain ATCC 33889 / DSM 1251) (Thiomicrospira denitrificans (strain ATCC 33889 / DSM 1251)).